Here is a 306-residue protein sequence, read N- to C-terminus: Aspartate carbamoyltransferase catalytic subunit (306 aa).

Residues R55 and T56 each contribute to the carbamoyl phosphate site. K84 serves as a coordination point for L-aspartate. Residues R105, H133, and Q136 each coordinate carbamoyl phosphate. L-aspartate-binding residues include R166 and R227. Positions 265 and 266 each coordinate carbamoyl phosphate.

This sequence belongs to the aspartate/ornithine carbamoyltransferase superfamily. ATCase family. As to quaternary structure, heterododecamer (2C3:3R2) of six catalytic PyrB chains organized as two trimers (C3), and six regulatory PyrI chains organized as three dimers (R2).

It carries out the reaction carbamoyl phosphate + L-aspartate = N-carbamoyl-L-aspartate + phosphate + H(+). Its pathway is pyrimidine metabolism; UMP biosynthesis via de novo pathway; (S)-dihydroorotate from bicarbonate: step 2/3. Catalyzes the condensation of carbamoyl phosphate and aspartate to form carbamoyl aspartate and inorganic phosphate, the committed step in the de novo pyrimidine nucleotide biosynthesis pathway. This chain is Aspartate carbamoyltransferase catalytic subunit, found in Neisseria meningitidis serogroup C / serotype 2a (strain ATCC 700532 / DSM 15464 / FAM18).